The primary structure comprises 243 residues: Sec-independent protein translocase protein TATB, chloroplastic (243 aa).

The transit peptide at 1-67 (MTPTANLLLP…SRTRRRNVIC (67 aa)) directs the protein to the chloroplast. Over 68 to 69 (AS) the chain is Lumenal. A helical transmembrane segment spans residues 70 to 90 (LFGVGAPEALVIGVVALLVFG). The Stromal segment spans residues 91–243 (PKGLAEVARN…NKSQKAEGER (153 aa)). Disordered stretches follow at residues 129 to 165 (EIGI…PAPY) and 178 to 243 (IAAS…EGER). Polar residues-rich tracts occupy residues 135-152 (VSQS…NQQP) and 187-204 (NPQQ…PTTP).

The protein belongs to the TatB family. As to quaternary structure, in thylakoid membranes, TATC and TATB form a large receptor complex, containing about eight TATC-TATB pairs, which binds the precursor protein. Twin arginine signal peptide promotes pH-triggered docking of TATA oligomers to TATC-TATB receptor complex, inducing a conformational switch of TATA that results in activation of the translocase. TATA dissociates from TATC-TATB upon completion of translocation.

The protein resides in the plastid. It localises to the chloroplast thylakoid membrane. Part of the twin-arginine translocation (Tat) system that transports large folded proteins containing a characteristic twin-arginine motif in their signal peptide across the thylakoid membrane. Involved in delta pH-dependent protein transport required for chloroplast development, especially thylakoid membrane formation. TATC and TATB mediate precursor recognition, whereas TATA facilitates translocation. The polypeptide is Sec-independent protein translocase protein TATB, chloroplastic (Zea mays (Maize)).